Consider the following 187-residue polypeptide: Putative manganese efflux pump MntP (187 aa).

6 consecutive transmembrane segments (helical) span residues 3–23 (FYSLIFLSCALGMDAFAVSLC), 35–55 (HYLIVGIYFGGFQALMPTIGY), 56–76 (FIGITFASFIASIDHWIAFIL), 107–127 (LALAIATSIDALAVGVSFAFL), 129–149 (VNLLLAIFLIGIITFILCIIA), and 166–186 (LLGGLVLIILGVKILIEHLFF).

This sequence belongs to the MntP (TC 9.B.29) family.

Its subcellular location is the cell inner membrane. In terms of biological role, probably functions as a manganese efflux pump. This chain is Putative manganese efflux pump MntP, found in Campylobacter jejuni (strain RM1221).